The primary structure comprises 329 residues: Serine dehydratase-like (329 aa).

Position 1 is an N-acetylmethionine (Met1). An N6-(pyridoxal phosphate)lysine modification is found at Lys48.

The protein belongs to the serine/threonine dehydratase family. Monomer. Homodimer. It depends on pyridoxal 5'-phosphate as a cofactor. Abundantly expressed in liver.

The enzyme catalyses L-serine = pyruvate + NH4(+). It carries out the reaction L-threonine = 2-oxobutanoate + NH4(+). It catalyses the reaction L-glutamate = D-glutamate. Functionally, catalyzes the pyridoxal-phosphate-dependent dehydrative deamination of L-threonine and L-serine to ammonia and alpha-ketobutyrate and pyruvate, respectively. Also exhibits racemase activity towards L-glutamate and D-glutamate. The chain is Serine dehydratase-like (Sdsl) from Mus musculus (Mouse).